The primary structure comprises 254 residues: Probable transcriptional regulator ycf27 (254 aa).

The Response regulatory domain occupies 16–129 (KVLIVDDEAS…ELEARIRAVL (114 aa)). Aspartate 65 carries the post-translational modification 4-aspartylphosphate. The H-T-H motif DNA-binding region spans 85-103 (DVPIIMLTALGDVADRITG). Positions 144–245 (SGIINFNFLT…ARGTGYLFQR (102 aa)) form a DNA-binding region, ompR/PhoB-type.

It is found in the plastid. The protein resides in the chloroplast. Its function is as follows. Probable promoter-specific protein mediating the interaction between DNA and RNA polymerase. The protein is Probable transcriptional regulator ycf27 (ycf27) of Guillardia theta (Cryptophyte).